The chain runs to 197 residues: HTH-type transcriptional regulator BetI (197 aa).

The HTH tetR-type domain maps to 8–68 (PIRRQQLIQA…ATMRHLMNAL (61 aa)). The segment at residues 31–50 (SIALIARLAGVSNGIISHYF) is a DNA-binding region (H-T-H motif).

The protein operates within amine and polyamine biosynthesis; betaine biosynthesis via choline pathway [regulation]. Its function is as follows. Repressor involved in the biosynthesis of the osmoprotectant glycine betaine. It represses transcription of the choline transporter BetT and the genes of BetAB involved in the synthesis of glycine betaine. This chain is HTH-type transcriptional regulator BetI, found in Pseudomonas syringae pv. tomato (strain ATCC BAA-871 / DC3000).